The following is a 213-amino-acid chain: Bacteriochlorophyll synthase 23 kDa chain (213 aa).

It participates in porphyrin-containing compound metabolism; bacteriochlorophyll biosynthesis (light-independent). In Rhodobacter capsulatus (strain ATCC BAA-309 / NBRC 16581 / SB1003), this protein is Bacteriochlorophyll synthase 23 kDa chain (bchJ).